The following is a 1107-amino-acid chain: MQTLETTSKSNPGEVKAQKPSTRRTKVGKACDSCRRRKIKCNGLKPCPSCTIYGCECTYTDAKSTKNLKSNDAGKSKPTGRVSKNKETTRVDKDIRKLEQQYVPINANIHVGPRFPSENILNGYPQCGAPQNNVVGNPLAVNTQCHRGLSETPMSSTFKESNLRDDRLLQSSDTDDMRNGDSEERDLKGSDSENVKSKDNKSDPLIIYKDDTHIESTVNKLTQAVNELKSLQNAPSSIKSSIDAIELQLRNILDNWKPEVDFEKAKINESATTKSLETNLLRNKYTNHVHLTRFRIWIDYKNANKNNHFMGECGFSLAESFFASNQPLVDELFGLYSQVEAFSLQGLGYCVHLYEPYMKTEEAIKLMKETLYIILRFIDICVHHINEESISIANPLETYLRKKHLMPMTPTPRSSYGSPQSASTKSLVSKIIERIPQPFIESVTNVSSLQLLDLRDDESKMFGTLLNMCKSIRRKFDSVMSDYDSIVTEKSEGEQNDGKVTVAEFTSLCEAEEMLLALCYNYYNLTLYSFFEFGTNIEYMEHLLLLLEEQLALDEYYGFEKVLNVAVANAKKMGFHRWEFYVGYEESTAEKRRLLWWKLYNYEKASTMKKGFFSVIDDATVNCLLPKIFRNFGYLDRVEFLENIQKPMDLSVFSDVPISVLCKYGELALTIVTSEFHEKFLYADRYTSIRNSAKPPTLKNQLIKEIVDGIAYTETSYEAIRKQTAKLWDIALGKVTKDKINKEDTAAASKFTLSYEYHRFRLINMADNLIARLMVKPKSDWLISVMKGHLNRLYEHWKVMNEIILSMDNDYSIATTFEYYAPSCLCLATQTFLIVRNMEMDDVKMMVAVYKRFLNLGMFLQSAKVCSLADSHTFRDFSRSFSFITIISRLMIIEFMQIKELTKVEFIEKFSEVCPDLADLPPMLLDPNSCLYFSLLQQIKKSGFTLSFKKILEDARMMDFNYDRNLDSEAIKKCNGEFSKSMPSCTNVSDTTTAVSDNSAKKKASMGSARVNSTDTLTASPLSGLRNQTQLDSKDSVPSLEAYTPIDSVSDVPTGEINVPFPPVYNQNGLDQQTTYNLGTLDEFVNKGDLNELYNSLWGDLFSDVYL.

Positions 1-11 are enriched in polar residues; it reads MQTLETTSKSN. Residues 1 to 27 form a disordered region; that stretch reads MQTLETTSKSNPGEVKAQKPSTRRTKV. The segment at 1 to 296 is DNA-binding domain (DBD); sequence MQTLETTSKS…NHVHLTRFRI (296 aa). The zn(2)-C6 fungal-type DNA-binding region spans 31–57; that stretch reads CDSCRRRKIKCNGLKPCPSCTIYGCEC. Disordered stretches follow at residues 66-89 and 149-204; these read KNLK…KETT and LSET…KSDP. A compositionally biased stretch (basic and acidic residues) spans 175-204; the sequence is DDMRNGDSEERDLKGSDSENVKSKDNKSDP. An inhibitory domain (ID) region spans residues 323–476; it reads ASNQPLVDEL…NMCKSIRRKF (154 aa). The segment at 542-616 is middle homology region (MHR); sequence HLLLLLEEQL…TMKKGFFSVI (75 aa). The interval 968-1107 is activation domain (AD); that stretch reads SEAIKKCNGE…WGDLFSDVYL (140 aa). Residues 999 to 1022 form a disordered region; sequence SAKKKASMGSARVNSTDTLTASPL. A compositionally biased stretch (polar residues) spans 1010–1022; it reads RVNSTDTLTASPL. The short motif at 1091–1099 is the 9aaTAD element; it reads NELYNSLWG.

As to quaternary structure, interacts (via the activation domain AD) with the mediator subunit GAL11A (via the KIX domain).

The protein localises to the nucleus. In terms of biological role, master transcriptional regulator of a pleiotropic drug resistance network that contributes to the azole resistance of clinical isolates and petite mutants. Regulates the efflux of rhodamine 6G. Regulates both constitutive and drug-induced expression of the pleiotropic ABC efflux transporter CDR1. Commonly regulated genes include also those encoding ABC transporters PDH1, SNQ2, and YOR1, a phospholipid biosynthetic enzyme (PDR16), seven-transmembrane (TM) domain-containing proteins (RTA1 and RSB1), an oxidoreductase (YMR102c-like), a sphingolipid biosynthetic enzyme (IPT1), and a transcription factor (RPN4). Second, along with this common core of regulated genes, interesting unique genes including genes encoding an ABC transporter likely localized to the vacuolar membrane (YBT1), proteins involved in DNA repair (REV1 and MEC3), the mitochondrially targeted proteins YIM1 and PUP1, 3 oxidoreductases (OYE2, YIR036c-like, and YNL134c-like proteins), a major facilitator superfamily member (QDR2), a carbonic anhydrase (NCE103), an alcohol acetyltransferase (ATF2), and a transcription factor (HAPI). Activates transcription of target genes in response to direct binding to specific xenobiotics by a discrete transferable ligand-binding domain. Stimulates gene expression of target genes via binding to 5'-TCCGYGGA-3' elements called pleiotropic drug response elements (PDREs). PDR1 is recruited to the target promoters by mediator subunit GAL11A via its interaction with the KIX domain of GAL11A. Modulates the interaction with host cells in ways that may contribute to increased virulence. Regulates specific cell wall adhesins and in particular EPA1, explaining the increase in adherence to epithelial cells in gain-of-function mutants. The polypeptide is Transcription factor PDR1 (Candida glabrata (strain ATCC 2001 / BCRC 20586 / JCM 3761 / NBRC 0622 / NRRL Y-65 / CBS 138) (Yeast)).